The chain runs to 212 residues: Fibroblast growth factor 8b (212 aa).

The signal sequence occupies residues methionine 1 to glutamine 27. Residue asparagine 139 is glycosylated (N-linked (GlcNAc...) asparagine).

This sequence belongs to the heparin-binding growth factors family.

Its subcellular location is the secreted. In terms of biological role, may act as signaling molecule during development of the midbrain-hindbrain boundary (MHB) organizer, and be involved in patterning of the nervous system. The polypeptide is Fibroblast growth factor 8b (fgf8b) (Danio rerio (Zebrafish)).